Consider the following 140-residue polypeptide: MWLQNLLLLGTVVCSICAPTDLLSPVTQSWKHVDATINEALSLLNHTSDPAAVMNETVEVVYDQFEPQEPTCLQTRLALFMKGLRGNLTRLEGSLTLMANFYKQHCPPTPETSCMTQIITFKSFKENLKRFLFAIPFDCW.

Positions 1–17 (MWLQNLLLLGTVVCSIC) are cleaved as a signal peptide. Residue S24 is glycosylated (O-linked (GalNAc...) serine). Residue T27 is glycosylated (O-linked (GalNAc...) threonine). N-linked (GlcNAc...) asparagine glycans are attached at residues N45, N55, and N87. Disulfide bonds link C72–C114 and C106–C139.

This sequence belongs to the GM-CSF family. In terms of assembly, monomer. The signaling GM-CSF receptor complex is a dodecamer of two head-to-head hexamers of two alpha, two beta, and two ligand subunits.

It localises to the secreted. Functionally, cytokine that stimulates the growth and differentiation of hematopoietic precursor cells from various lineages, including granulocytes, macrophages, eosinophils and erythrocytes. The protein is Granulocyte-macrophage colony-stimulating factor (CSF2) of Cavia porcellus (Guinea pig).